The following is a 148-amino-acid chain: Auxin-responsive protein SAUR65 (148 aa).

It belongs to the ARG7 family.

The protein resides in the cell membrane. Functionally, may promote auxin-stimulated organ elongation, such as hypocotyls, stamen filaments and petals. The polypeptide is Auxin-responsive protein SAUR65 (Arabidopsis thaliana (Mouse-ear cress)).